Here is a 311-residue protein sequence, read N- to C-terminus: Pyrimidine-specific ribonucleoside hydrolase RihA (311 aa).

His-240 is a catalytic residue.

It belongs to the IUNH family. RihA subfamily.

In terms of biological role, hydrolyzes cytidine or uridine to ribose and cytosine or uracil, respectively. This Salmonella schwarzengrund (strain CVM19633) protein is Pyrimidine-specific ribonucleoside hydrolase RihA.